Consider the following 467-residue polypeptide: UDP-N-acetylmuramate--L-alanine ligase (467 aa).

ATP is bound at residue Gly-114–Thr-120.

The protein belongs to the MurCDEF family.

It localises to the cytoplasm. The catalysed reaction is UDP-N-acetyl-alpha-D-muramate + L-alanine + ATP = UDP-N-acetyl-alpha-D-muramoyl-L-alanine + ADP + phosphate + H(+). Its pathway is cell wall biogenesis; peptidoglycan biosynthesis. Its function is as follows. Cell wall formation. The protein is UDP-N-acetylmuramate--L-alanine ligase of Bradyrhizobium sp. (strain BTAi1 / ATCC BAA-1182).